A 274-amino-acid polypeptide reads, in one-letter code: tRNA-cytidine(32) 2-sulfurtransferase (274 aa).

A PP-loop motif motif is present at residues 40 to 45; it reads SGGKDS. [4Fe-4S] cluster is bound by residues C115, C118, and C206.

This sequence belongs to the TtcA family. Homodimer. Mg(2+) is required as a cofactor. Requires [4Fe-4S] cluster as cofactor.

The protein localises to the cytoplasm. It catalyses the reaction cytidine(32) in tRNA + S-sulfanyl-L-cysteinyl-[cysteine desulfurase] + AH2 + ATP = 2-thiocytidine(32) in tRNA + L-cysteinyl-[cysteine desulfurase] + A + AMP + diphosphate + H(+). Its pathway is tRNA modification. Its function is as follows. Catalyzes the ATP-dependent 2-thiolation of cytidine in position 32 of tRNA, to form 2-thiocytidine (s(2)C32). The sulfur atoms are provided by the cysteine/cysteine desulfurase (IscS) system. The protein is tRNA-cytidine(32) 2-sulfurtransferase of Pseudomonas paraeruginosa (strain DSM 24068 / PA7) (Pseudomonas aeruginosa (strain PA7)).